Here is a 369-residue protein sequence, read N- to C-terminus: Isocitrate dehydrogenase [NAD] subunit 2, mitochondrial (369 aa).

The transit peptide at 1-15 (MLRNTFFRNTSRRFL) directs the protein to the mitochondrion. A Phosphothreonine modification is found at Thr105. Residues Arg119, Arg129, and Arg150 each contribute to the substrate site. Thr153 is subject to Phosphothreonine. A substrate-binding site is contributed by Asp237. 3 residues coordinate Mg(2+): Asp237, Asp263, and Asp267. A phosphothreonine mark is found at Thr327 and Thr349.

The protein belongs to the isocitrate and isopropylmalate dehydrogenases family. In terms of assembly, octamer of two non-identical subunits IDH1 and IDH2. The cofactor is Mg(2+). Requires Mn(2+) as cofactor.

It localises to the mitochondrion matrix. The catalysed reaction is D-threo-isocitrate + NAD(+) = 2-oxoglutarate + CO2 + NADH. Its activity is regulated as follows. Allosterically regulated by several compounds including AMP, NAD(+), and citrate. Performs an essential role in the oxidative function of the citric acid cycle. Also binds RNA; specifically to the 5'-untranslated leaders of mitochondrial mRNAs. In Saccharomyces cerevisiae (strain ATCC 204508 / S288c) (Baker's yeast), this protein is Isocitrate dehydrogenase [NAD] subunit 2, mitochondrial (IDH2).